A 357-amino-acid chain; its full sequence is 3-isopropylmalate dehydrogenase (357 aa).

Substrate is bound by residues arginine 97, arginine 107, arginine 135, and aspartate 224. Mg(2+) contacts are provided by aspartate 224, aspartate 248, and aspartate 252. 282 to 294 contacts NAD(+); that stretch reads GSAPDIAGKNIAN.

This sequence belongs to the isocitrate and isopropylmalate dehydrogenases family. LeuB type 1 subfamily. As to quaternary structure, homodimer. The cofactor is Mg(2+). Requires Mn(2+) as cofactor.

The protein localises to the cytoplasm. The enzyme catalyses (2R,3S)-3-isopropylmalate + NAD(+) = 4-methyl-2-oxopentanoate + CO2 + NADH. It functions in the pathway amino-acid biosynthesis; L-leucine biosynthesis; L-leucine from 3-methyl-2-oxobutanoate: step 3/4. In terms of biological role, catalyzes the oxidation of 3-carboxy-2-hydroxy-4-methylpentanoate (3-isopropylmalate) to 3-carboxy-4-methyl-2-oxopentanoate. The product decarboxylates to 4-methyl-2 oxopentanoate. In Prochlorococcus marinus subsp. pastoris (strain CCMP1986 / NIES-2087 / MED4), this protein is 3-isopropylmalate dehydrogenase.